The chain runs to 30 residues: Kappa-sparatoxin-Hv1d (30 aa).

Disulfide bonds link Cys3–Cys17, Cys10–Cys22, and Cys16–Cys26.

Expressed by the venom gland.

It is found in the secreted. In terms of biological role, inhibitor of voltage-gated potassium channels of the Kv4/KCND family. Blocks calcium channels (Cav). In Heteropoda venatoria (Brown huntsman spider), this protein is Kappa-sparatoxin-Hv1d.